Here is a 470-residue protein sequence, read N- to C-terminus: Putative multidrug resistance protein MdtD (470 aa).

Residues 1–11 lie on the Periplasmic side of the membrane; sequence MTELPDNTRWQ. Residues 12-32 form a helical membrane-spanning segment; sequence LWIVAFGFFMQSLDTTIVNTA. Residues 33–48 lie on the Cytoplasmic side of the membrane; the sequence is LPSMAKSLGESPLHMH. A helical membrane pass occupies residues 49–69; the sequence is MVVVSYVLTVAVMLPASGWLA. Topologically, residues 70–76 are periplasmic; that stretch reads DKIGVRN. Residues 77–97 traverse the membrane as a helical segment; sequence IFFAAIVLFTLGSLFCALSGT. Topologically, residues 98–101 are cytoplasmic; that stretch reads LNQL. The helical transmembrane segment at 102 to 124 threads the bilayer; it reads VLARVLQGVGGAMMVPVGRLTVM. Over 125–137 the chain is Periplasmic; it reads KIVPRAQYMAAMT. The chain crosses the membrane as a helical span at residues 138–158; sequence FVTLPGQIGPLLGPALGGVLV. Topologically, residues 159-164 are cytoplasmic; that stretch reads EYASWH. Residues 165 to 185 traverse the membrane as a helical segment; it reads WIFLINIPVGIVGAMATFMLM. Over 186-196 the chain is Periplasmic; that stretch reads PNYTIETRRFD. The helical transmembrane segment at 197–217 threads the bilayer; that stretch reads LPGFLLLAIGMAVLTLALDGS. Residues 218–224 lie on the Cytoplasmic side of the membrane; sequence KSMGISP. A helical membrane pass occupies residues 225–245; it reads WTLAGLAAGGAAAILLYLFHA. Residues 246 to 262 are Periplasmic-facing; the sequence is KKSSGALFSLRLFRTPT. A helical membrane pass occupies residues 263–283; that stretch reads FSLGLLGSFAGRIGSGMLPFM. Over 284-285 the chain is Cytoplasmic; that stretch reads TP. The helical transmembrane segment at 286-306 threads the bilayer; that stretch reads VFLQIGLGFSPFHAGLMMIPM. The Periplasmic portion of the chain corresponds to 307–341; it reads VLGSMGMKRIVVQIVNRFGYRRVLVATTLGLALVS. Residues 342–362 form a helical membrane-spanning segment; the sequence is LLFMSVALLGWYYLLPLVLLL. The Cytoplasmic segment spans residues 363–395; sequence QGMVNSARFSSMNTLTLKDLPDTLASSGNSLLS. The helical transmembrane segment at 396-416 threads the bilayer; sequence MIMQLSMSIGVTIAGMLLGMF. The Periplasmic portion of the chain corresponds to 417-430; that stretch reads GQQHIGIDSSATHH. The helical transmembrane segment at 431-451 threads the bilayer; it reads VFMYTWLCMAVIIALPAIIFA. Residues 452 to 470 are Cytoplasmic-facing; the sequence is RVPNDTQQNMVISRRKRSL.

This sequence belongs to the major facilitator superfamily. TCR/Tet family.

Its subcellular location is the cell inner membrane. The sequence is that of Putative multidrug resistance protein MdtD from Salmonella paratyphi A (strain ATCC 9150 / SARB42).